The chain runs to 728 residues: Dynamin-like protein 1 (728 aa).

The assembly domain, required for tetramerization stretch occupies residues 1–119 (MKELFQKIWQ…ILQEKVQSID (119 aa)). The region spanning 159-442 (QNLEFNIAIT…LYAGEKSKIA (284 aa)) is the Dynamin-type G domain. The interval 169 to 176 (GVMNAGKS) is G1 motif. 171–177 (MNAGKSS) contributes to the GDP binding site. The interval 195–196 (ET) is G2 motif. The G3 motif stretch occupies residues 298–301 (DTPG). The tract at residues 358 to 361 (TKAD) is G4 motif. Lys-359 provides a ligand contact to GDP. Residue Glu-388 is a region of interest, G5 motif. 400–402 (SAK) is a binding site for GDP. The tract at residues 470 to 695 (ENKQGVSEEN…LESLEKVLQS (226 aa)) is required for liposome binding but not for tetramerization.

The protein belongs to the TRAFAC class dynamin-like GTPase superfamily. Dynamin/Fzo/YdjA family. Forms a 2:2 heterotetramer with DLP1. DLP2 forms a central back-to-back dimer flanked on each side by a DLP1 subunit. In the crystal structures the 2 DLP1 subunits are in very different conformations.

The protein resides in the cytoplasm. The protein localises to the cytosol. The catalysed reaction is GTP + H2O = GDP + phosphate + H(+). Functionally, the heterotetrameric DLP1(2)-DLP2(2) complex tethers liposomes and may mediate their fusion. Initial binding is probably mediated by DLP1, while DLP2 couples DLP1 subunits and increases the effective reach of the complex up to 45 nm. The role of the nucleotide is unknown. This subunit alone weakly binds to liposomes; GTP, GDP, GMPPCP and GMPPNP do not change heterotetramer binding. Tetramerization is required for GTPase activity, suggesting the GTPase domains (dynamin-type G) from DLP1 and DLP2 must dimerize to reconstitute the GTPase active site. The polypeptide is Dynamin-like protein 1 (Campylobacter jejuni subsp. jejuni serotype O:23/36 (strain 81-176)).